The chain runs to 704 residues: Sulfate anion transporter 1 (704 aa).

At Thr-13 the chain carries Phosphothreonine. The next 2 membrane-spanning stretches (helical) occupy residues 68-90 (YLAGDVMSGLVIGIILVPQAIAY) and 94-116 (AGLQPIYSLYTSFFANLIYFLMG). N-linked (GlcNAc...) asparagine glycosylation is found at Asn-158 and Asn-163. 7 helical membrane-spanning segments follow: residues 185 to 207 (VATALTLMAGLYQVLMGILRLGF), 260 to 282 (NVGQANICDVVTSALCLGVLLAA), 295 to 314 (VPIPTELFVIVVATIVSHFG), 347 to 369 (ALDAMSLALVGSAFSISLAEMFA), 382 to 404 (LLAVGCCNVLPAFFHCFATSAAL), 417 to 439 (TQLSSVVSAAVVLLVLLVLAPLF), and 477 to 499 (LVWVATAATCVLVSTEAGLLAGV). In terms of domain architecture, STAS spans 532–690 (EFEGLLPPPE…PSVHSAVEAA (159 aa)). At Ser-587 the chain carries Phosphoserine. Asn-588 carries N-linked (GlcNAc...) asparagine glycosylation. Ser-590 carries the phosphoserine modification.

This sequence belongs to the SLC26A/SulP transporter (TC 2.A.53) family. As to expression, expressed in the heart, cecum, calvaria, brain, liver, skeletal muscle and kidney.

It is found in the cell membrane. It localises to the basolateral cell membrane. It carries out the reaction thiosulfate(in) + sulfate(out) = thiosulfate(out) + sulfate(in). The catalysed reaction is 2 hydrogencarbonate(out) + sulfate(in) = 2 hydrogencarbonate(in) + sulfate(out). It catalyses the reaction oxalate(in) + sulfate(out) = oxalate(out) + sulfate(in). The enzyme catalyses oxalate(in) + 2 hydrogencarbonate(out) = oxalate(out) + 2 hydrogencarbonate(in). In terms of biological role, sodium-independent sulfate anion transporter. Can transport other anions including bicarbonate, thiosulfate and oxalate by mediating sulfate-hydrogencarbonate, sulfate-oxalate and oxalate-hydrogencarbonate anion exchange. Mediates sulfate-thiosulfate anion exchange. In Mus musculus (Mouse), this protein is Sulfate anion transporter 1 (Slc26a1).